The following is a 434-amino-acid chain: RHOMBOID-like protein 9, chloroplastic (434 aa).

The N-terminal 68 residues, 1-68 (MALFPLHHEV…SPRRRLCLVR (68 aa)), are a transit peptide targeting the chloroplast. Transmembrane regions (helical) follow at residues 182 to 202 (FYAV…EAAA), 209 to 229 (MGLL…ILAG), 238 to 258 (MFLH…LTFG), 267 to 287 (LFTF…MSFL), 289 to 309 (TADP…AWLV), 326 to 346 (LFQK…FGPI), 352 to 372 (LGAL…LQLG), and 399 to 419 (FLLF…IGDG).

Belongs to the peptidase S54 family.

The protein resides in the plastid. It localises to the chloroplast membrane. In terms of biological role, probable rhomboid-type serine protease that catalyzes intramembrane proteolysis. The sequence is that of RHOMBOID-like protein 9, chloroplastic from Arabidopsis thaliana (Mouse-ear cress).